The sequence spans 370 residues: Cytochrome b (370 aa).

Transmembrane regions (helical) follow at residues 25–45 (FGSM…FLAV), 69–90 (WLMQ…YIHI), 105–125 (WLSG…GYVL), and 170–190 (FFAL…LHIM). Heme b contacts are provided by His75 and His89. 2 residues coordinate heme b: His174 and His188. A ubiquinone is bound at residue His193. Helical transmembrane passes span 218-238 (YKDL…VSFF), 280-300 (LGGA…PFTH), 312-332 (FMQL…WTAT), and 339-358 (FTTI…ISNP).

It belongs to the cytochrome b family. In terms of assembly, the cytochrome bc1 complex contains 3 respiratory subunits (MT-CYB, CYC1 and UQCRFS1), 2 core proteins (UQCRC1 and UQCRC2) and probably 6 low-molecular weight proteins. It depends on heme b as a cofactor.

The protein resides in the mitochondrion inner membrane. Functionally, component of the ubiquinol-cytochrome c reductase complex (complex III or cytochrome b-c1 complex) that is part of the mitochondrial respiratory chain. The b-c1 complex mediates electron transfer from ubiquinol to cytochrome c. Contributes to the generation of a proton gradient across the mitochondrial membrane that is then used for ATP synthesis. The sequence is that of Cytochrome b (MT-CYB) from Chilabothrus fordii (Ford's boa).